The sequence spans 48 residues: Sperm protamine P1 (48 aa).

Belongs to the protamine P1 family. As to expression, testis.

The protein localises to the nucleus. The protein resides in the chromosome. Protamines substitute for histones in the chromatin of sperm during the haploid phase of spermatogenesis. They compact sperm DNA into a highly condensed, stable and inactive complex. This is Sperm protamine P1 (PRM1) from Monophyllus redmani (Greater Antillean long-tongued bat).